Consider the following 369-residue polypeptide: Chaperone protein DnaJ (369 aa).

The 65-residue stretch at 3–67 (DHYEVLGVER…QQRQQYDRGG (65 aa)) folds into the J domain. Residues 123–205 (GAHRDLEVDT…CQGQGRVRAR (83 aa)) form a CR-type zinc finger. Zn(2+) contacts are provided by Cys136, Cys139, Cys153, Cys156, Cys179, Cys182, Cys193, and Cys196. 4 CXXCXGXG motif repeats span residues 136-143 (CETCDGSC), 153-160 (CDICHGTG), 179-186 (CGSCRGYG), and 193-200 (CVTCQGQG).

It belongs to the DnaJ family. As to quaternary structure, homodimer. It depends on Zn(2+) as a cofactor.

It is found in the cytoplasm. Functionally, participates actively in the response to hyperosmotic and heat shock by preventing the aggregation of stress-denatured proteins and by disaggregating proteins, also in an autonomous, DnaK-independent fashion. Unfolded proteins bind initially to DnaJ; upon interaction with the DnaJ-bound protein, DnaK hydrolyzes its bound ATP, resulting in the formation of a stable complex. GrpE releases ADP from DnaK; ATP binding to DnaK triggers the release of the substrate protein, thus completing the reaction cycle. Several rounds of ATP-dependent interactions between DnaJ, DnaK and GrpE are required for fully efficient folding. Also involved, together with DnaK and GrpE, in the DNA replication of plasmids through activation of initiation proteins. The chain is Chaperone protein DnaJ from Leifsonia xyli subsp. xyli (strain CTCB07).